We begin with the raw amino-acid sequence, 867 residues long: Bifunctional diterpene synthase, chloroplastic (867 aa).

A chloroplast-targeting transit peptide spans 1-55 (MAKVLFSSFQQTGISGSLKSGQLSGVFINGTNLKSNAHAKRFRKNSTSSITIRCC). Residue Lys-255 coordinates substrate. Asp-389 and Asp-391 together coordinate Mg(2+). A DXDD motif motif is present at residues 389–392 (DIDD). Lys-474 serves as a coordination point for substrate. The Mg(2+) site is built by Asp-611, Asp-615, Asn-758, Thr-762, and Glu-766. The DDXXD motif motif lies at 611–615 (DDLMD).

Belongs to the terpene synthase family. Mg(2+) is required as a cofactor.

It localises to the plastid. The protein localises to the chloroplast. It catalyses the reaction (+)-copalyl diphosphate = miltiradiene + diphosphate. It carries out the reaction (2E,6E,10E)-geranylgeranyl diphosphate = (+)-copalyl diphosphate. It participates in secondary metabolite biosynthesis; terpenoid biosynthesis. Its function is as follows. Bifunctional diterpene cyclase that catalyzes the successive two-step type-B (protonation-initiated cyclization) and type-A (ionization-initiated cyclization) reactions of geranylgeranyl diphosphate (GGDP) producing successively (+)-copalyl diphosphate and miltiradiene. In Selaginella moellendorffii (Spikemoss), this protein is Bifunctional diterpene synthase, chloroplastic (MDS).